Here is a 164-residue protein sequence, read N- to C-terminus: 17.8 kDa heat shock protein (164 aa).

Residues Val-20–Asp-154 form the sHSP domain. Residues Gly-68 to Val-93 are disordered.

The protein belongs to the small heat shock protein (HSP20) family. As to quaternary structure, may form oligomeric structures.

The protein localises to the cytoplasm. The chain is 17.8 kDa heat shock protein (HSP17.8) from Oryza sativa subsp. japonica (Rice).